Consider the following 32-residue polypeptide: Potassium channel toxin alpha-KTx 9.4 (32 aa).

3 disulfides stabilise this stretch: Cys-3–Cys-19, Cys-6–Cys-24, and Cys-10–Cys-26.

In terms of tissue distribution, expressed by the venom gland.

The protein localises to the secreted. Functionally, blocker of human voltage-gated potassium channel Kv1.1/KCNA1. In Hottentotta tamulus (Eastern Indian scorpion), this protein is Potassium channel toxin alpha-KTx 9.4.